Consider the following 153-residue polypeptide: Natriuretic peptides A (153 aa).

A signal peptide spans 1–25 (MGPFSTITVSFLFCLAFWHPDQIGA). Propeptides lie at residues 26 to 123 (NPVY…TAPR) and 93 to 103 (DGEALGRSTWE). Residues 54–101 (EDEAVPPQALSEQSDEAGAALSPLPEVPPWTGEVSPAQRDGEALGRST) form a disordered region. The residue at position 129 (Ser129) is a Phosphoserine. A disulfide bond links Cys130 and Cys146. The segment at 147–151 (NSFRY) is important for degradation of atrial natriuretic peptide by IDE.

It belongs to the natriuretic peptide family. In terms of assembly, homodimer; disulfide-linked antiparallel dimer. Post-translationally, the precursor molecule is proteolytically cleaved by CORIN at Arg-123 to produce the atrial natriuretic peptide. Undergoes further proteolytic cleavage by unknown proteases to give rise to long-acting natriuretic peptide, vessel dilator and kaliuretic peptide. Additional processing gives rise to the auriculin and atriopeptin peptides. In the kidneys, alternative processing by an unknown protease results in the peptide urodilatin. Cleavage by MME initiates degradation of the factor and thereby regulates its activity. Degradation by IDE results in reduced activation of NPR1 (in vitro). During IDE degradation, the resulting products can temporarily stimulate NPR2 to produce cGMP, before the fragments are completely degraded and inactivated by IDE (in vitro). In terms of processing, degraded by IDE. Post-translationally, phosphorylation on Ser-129 decreases vasorelaxant activity.

It localises to the secreted. It is found in the perikaryon. The protein resides in the cell projection. Its function is as follows. Hormone that plays a key role in mediating cardio-renal homeostasis, and is involved in vascular remodeling and regulating energy metabolism. Acts by specifically binding and stimulating NPR1 to produce cGMP, which in turn activates effector proteins, such as PRKG1, that drive various biological responses. Regulates vasodilation, natriuresis, diuresis and aldosterone synthesis and is therefore essential for regulating blood pressure, controlling the extracellular fluid volume and maintaining the fluid-electrolyte balance. Also involved in inhibiting cardiac remodeling and cardiac hypertrophy by inducing cardiomyocyte apoptosis and attenuating the growth of cardiomyocytes and fibroblasts. Plays a role in female pregnancy by promoting trophoblast invasion and spiral artery remodeling in uterus, and thus prevents pregnancy-induced hypertension. In adipose tissue, acts in various cGMP- and PKG-dependent pathways to regulate lipid metabolism and energy homeostasis. This includes up-regulating lipid metabolism and mitochondrial oxygen utilization by activating the AMP-activated protein kinase (AMPK), and increasing energy expenditure by acting via MAPK11 to promote the UCP1-dependent thermogenesis of brown adipose tissue. Binds the clearance receptor NPR3 which removes the hormone from circulation. In terms of biological role, may have a role in cardio-renal homeostasis through regulation of natriuresis, diuresis, vasodilation, and inhibiting aldosterone synthesis. In vitro, promotes the production of cGMP and induces vasodilation. May promote natriuresis, at least in part, by enhancing prostaglandin E2 synthesis resulting in the inhibition of renal Na+-K+-ATPase. However reports on the involvement of this peptide in mammal blood volume and blood pressure homeostasis are conflicting; according to a report, in vivo it is not sufficient to activate cGMP and does not inhibit collecting duct transport nor effect diuresis and natriuresis. Appears to bind to specific receptors that are distinct from the receptors bound by atrial natriuretic peptide and vessel dilator. Possibly enhances protein excretion in urine by decreasing proximal tubular protein reabsorption. Functionally, may have a role in cardio-renal homeostasis through regulation of natriuresis, diuresis, and vasodilation. In vitro, promotes the production of cGMP and induces vasodilation. May promote natriuresis, at least in part, by enhancing prostaglandin E2 synthesis resulting in the inhibition of renal Na+-K+-ATPase. However reports on the involvement of this peptide in mammal blood volume and blood pressure homeostasis are conflicting; according to a report it is not sufficient to activate cGMP and does not inhibit collecting duct transport nor effect diuresis and natriuresis. Appears to bind to specific receptors that are distinct from the receptors bound by the atrial natriuretic and long-acting natriuretic peptides. Possibly functions in protein excretion in urine by maintaining the integrity of the proximal tubules and enhancing protein excretion by decreasing proximal tubular protein reabsorption. May have a role in cardio-renal homeostasis through regulation of diuresis and inhibiting aldosterone synthesis. In vitro, promotes the production of cGMP and induces vasodilation. May promote natriuresis, at least in part, by enhancing prostaglandin E2 synthesis resulting in the inhibition of renal Na+-K+-ATPase. May have a role in potassium excretion but not sodium excretion (natriuresis). Possibly enhances protein excretion in urine by decreasing proximal tubular protein reabsorption. Its function is as follows. Hormone produced in the kidneys that appears to be important for maintaining cardio-renal homeostasis. Mediates vasodilation, natriuresis and diuresis primarily in the renal system, in order to maintain the extracellular fluid volume and control the fluid-electrolyte balance. Specifically binds and stimulates cGMP production by renal transmembrane receptors, likely NPR1. Urodilatin not ANP, may be the natriuretic peptide responsible for the regulation of sodium and water homeostasis in the kidney. In terms of biological role, may have a role in cardio-renal homeostasis through regulation of natriuresis and vasodilation. In vivo promotes natriuresis and in vitro, vasodilates renal artery strips. Functionally, may have a role in cardio-renal homeostasis through regulation of regulation of natriuresis and vasodilation. In vivo promotes natriuresis. In vitro, vasodilates intestinal smooth muscle but not smooth muscle strips. May have a role in cardio-renal homeostasis through regulation of natriuresis and vasodilation. In vivo promotes natriuresis. In vitro, selectively vasodilates intestinal and vascular smooth muscle strips. Its function is as follows. May have a role in cardio-renal homeostasis through regulation of natriuresis and vasodilation. In vivo promotes natriuresis. In vitro, selectively vasodilates intestinal smooth muscle but not vascular smooth muscle strips. This Oryctolagus cuniculus (Rabbit) protein is Natriuretic peptides A (NPPA).